A 376-amino-acid polypeptide reads, in one-letter code: Queuine tRNA-ribosyltransferase (376 aa).

The active-site Proton acceptor is aspartate 89. Substrate contacts are provided by residues 89–93 (DSGGF), aspartate 143, glutamine 194, and glycine 221. Positions 252 to 258 (GVGIPSN) are RNA binding. Catalysis depends on aspartate 271, which acts as the Nucleophile. Positions 276 to 280 (ARNGR) are RNA binding; important for wobble base 34 recognition. Residues cysteine 309, cysteine 311, cysteine 314, and histidine 340 each contribute to the Zn(2+) site.

It belongs to the queuine tRNA-ribosyltransferase family. Homodimer. Within each dimer, one monomer is responsible for RNA recognition and catalysis, while the other monomer binds to the replacement base PreQ1. Zn(2+) serves as cofactor.

It carries out the reaction 7-aminomethyl-7-carbaguanine + guanosine(34) in tRNA = 7-aminomethyl-7-carbaguanosine(34) in tRNA + guanine. The protein operates within tRNA modification; tRNA-queuosine biosynthesis. Catalyzes the base-exchange of a guanine (G) residue with the queuine precursor 7-aminomethyl-7-deazaguanine (PreQ1) at position 34 (anticodon wobble position) in tRNAs with GU(N) anticodons (tRNA-Asp, -Asn, -His and -Tyr). Catalysis occurs through a double-displacement mechanism. The nucleophile active site attacks the C1' of nucleotide 34 to detach the guanine base from the RNA, forming a covalent enzyme-RNA intermediate. The proton acceptor active site deprotonates the incoming PreQ1, allowing a nucleophilic attack on the C1' of the ribose to form the product. After dissociation, two additional enzymatic reactions on the tRNA convert PreQ1 to queuine (Q), resulting in the hypermodified nucleoside queuosine (7-(((4,5-cis-dihydroxy-2-cyclopenten-1-yl)amino)methyl)-7-deazaguanosine). The chain is Queuine tRNA-ribosyltransferase from Clostridium botulinum (strain Hall / ATCC 3502 / NCTC 13319 / Type A).